We begin with the raw amino-acid sequence, 138 residues long: 1,4-dihydroxy-2-naphthoyl-CoA hydrolase (138 aa).

The active site involves Asp-16.

This sequence belongs to the 4-hydroxybenzoyl-CoA thioesterase family. DHNA-CoA hydrolase subfamily.

It carries out the reaction 1,4-dihydroxy-2-naphthoyl-CoA + H2O = 1,4-dihydroxy-2-naphthoate + CoA + H(+). It participates in cofactor biosynthesis; phylloquinone biosynthesis. The protein operates within quinol/quinone metabolism; 1,4-dihydroxy-2-naphthoate biosynthesis; 1,4-dihydroxy-2-naphthoate from chorismate: step 7/7. In terms of biological role, catalyzes the specific hydrolysis of 1,4-dihydroxy-2-naphthoyl-CoA (DHNA-CoA) to 1,4-dihydroxy-2-naphthoate (DHNA), a reaction involved in phylloquinone (vitamin K1) biosynthesis. Is not active on benzoyl-CoA, phenylacetyl-CoA and aliphatic acyl-CoA thioesters. The protein is 1,4-dihydroxy-2-naphthoyl-CoA hydrolase of Synechocystis sp. (strain ATCC 27184 / PCC 6803 / Kazusa).